The primary structure comprises 473 residues: Beta-secretase 1 (473 aa).

Residues 1-21 (MAPALPWLLLWVGSGVLPVHG) form the signal peptide. Residues 22–45 (TQDGIRLPLRSGLAGAPLGLRLPR) constitute a propeptide that is removed on maturation. Over 22 to 429 (TQDGIRLPLR…PQTDESTLMT (408 aa)) the chain is Extracellular. Residues 72-388 (YYVEMTVGSP…DRARKRIGFA (317 aa)) form the Peptidase A1 domain. Asp90 is an active-site residue. Lys123 carries the post-translational modification N6-acetyllysine. Asn150, Asn169, and Asn195 each carry an N-linked (GlcNAc...) asparagine glycan. Intrachain disulfides connect Cys188-Cys392, Cys250-Cys415, and Cys302-Cys352. N6-acetyllysine occurs at positions 247, 251, and 257. Asp261 is an active-site residue. N6-acetyllysine is present on residues Lys271, Lys272, and Lys279. An N-linked (GlcNAc...) asparagine glycan is attached at Asn326. The helical transmembrane segment at 430–450 (IAYVMAAICALFMLPLCLMVC) threads the bilayer. 4 S-palmitoyl cysteine lipidation sites follow: Cys446, Cys450, Cys454, and Cys457. Topologically, residues 451–473 (QWRCLRCLRHQHDDFADDISLLK) are cytoplasmic. The tract at residues 451-473 (QWRCLRCLRHQHDDFADDISLLK) is interaction with RTN3. Residues 468–472 (DISLL) carry the DXXLL motif. Ser470 carries the post-translational modification Phosphoserine. Residue Lys473 forms a Glycyl lysine isopeptide (Lys-Gly) (interchain with G-Cter in ubiquitin) linkage.

This sequence belongs to the peptidase A1 family. As to quaternary structure, monomer. Interacts (via DXXLL motif) with GGA1, GGA2 and GGA3 (via their VHS domain); the interaction highly increases when BACE1 is phosphorylated at Ser-470. Interacts with RTN1; RTN2; RTN3 and RTN4; the interaction leads to inhibition of amyloid precursor protein processing. Interacts with SNX6. Interacts with PCSK9. Interacts with NAT8 and NAT8B. Interacts with BIN1. Interacts (via extracellular domain) with ADAM10 (via extracellular domain). Interacts with SORL1; this interaction may affect binding with APP and hence reduce APP cleavage. Interacts with NRDC AND NRG1. In terms of processing, palmitoylation mediates lipid raft localization. Post-translationally, acetylated in the endoplasmic reticulum at Lys-123, Lys-247, Lys-251, Lys-257, Lys-271, Lys-272, and Lys-279. Acetylation by NAT8 and NAT8B is transient and deacetylation probably occurs in the Golgi. Acetylation regulates the maturation, the transport to the plasma membrane, the stability and the expression of the protein. Ubiquitinated at Lys-473, ubiquitination leads to lysosomal degradation. Monoubiquitinated and 'Lys-63'-linked polyubitinated. Deubiquitnated by USP8; inhibits lysosomal degradation. In terms of processing, phosphorylation at Ser-470 is required for interaction with GGA1 and retrograded transport from endosomal compartments to the trans-Golgi network. Non-phosphorylated BACE1 enters a direct recycling route to the cell surface. Post-translationally, N-Glycosylated. Addition of a bisecting N-acetylglucosamine by MGAT3 blocks lysosomal targeting, further degradation and is required for maintaining stability under stress conditions.

The protein resides in the cell membrane. It is found in the golgi apparatus. Its subcellular location is the trans-Golgi network. The protein localises to the endoplasmic reticulum. It localises to the endosome. The protein resides in the cell surface. It is found in the cytoplasmic vesicle membrane. Its subcellular location is the membrane raft. The protein localises to the lysosome. It localises to the late endosome. The protein resides in the early endosome. It is found in the recycling endosome. Its subcellular location is the cell projection. The protein localises to the axon. It localises to the dendrite. The catalysed reaction is Broad endopeptidase specificity. Cleaves Glu-Val-Asn-Leu-|-Asp-Ala-Glu-Phe in the Swedish variant of Alzheimer's amyloid precursor protein.. Its activity is regulated as follows. Inhibited by RTN3 and RTN4. In terms of biological role, responsible for the proteolytic processing of the amyloid precursor protein (APP). Cleaves at the N-terminus of the A-beta peptide sequence, between residues 671 and 672 of APP, leads to the generation and extracellular release of beta-cleaved soluble APP, and a corresponding cell-associated C-terminal fragment which is later released by gamma-secretase. Cleaves CHL1. This is Beta-secretase 1 (BACE1) from Cavia porcellus (Guinea pig).